Reading from the N-terminus, the 327-residue chain is GMP reductase (327 aa).

Catalysis depends on cysteine 175, which acts as the Thioimidate intermediate. 204-227 (IIADGGIRTHGDIAKSIRFGASMV) lines the NADP(+) pocket.

The protein belongs to the IMPDH/GMPR family. GuaC type 2 subfamily.

It catalyses the reaction IMP + NH4(+) + NADP(+) = GMP + NADPH + 2 H(+). Catalyzes the irreversible NADPH-dependent deamination of GMP to IMP. It functions in the conversion of nucleobase, nucleoside and nucleotide derivatives of G to A nucleotides, and in maintaining the intracellular balance of A and G nucleotides. The chain is GMP reductase from Oceanobacillus iheyensis (strain DSM 14371 / CIP 107618 / JCM 11309 / KCTC 3954 / HTE831).